An 832-amino-acid chain; its full sequence is Protein P (832 aa).

A terminal protein domain (TP) region spans residues 1 to 177; it reads MPLSCQHFRK…FCGSPYSWEQ (177 aa). The interval 178 to 335 is spacer; sequence ELQHGAEPFC…NCLSHIVNLL (158 aa). A disordered region spans residues 198-264; the sequence is SIGPAVPSQH…HNTASSSSSC (67 aa). The segment at 336–679 is polymerase/reverse transcriptase domain (RT); sequence EDWGPCTEHG…YLTLYPVARQ (344 aa). One can recognise a Reverse transcriptase domain in the interval 346–589; it reads EHLIRIPRTP…YSLHFMGYVI (244 aa). D418, D540, and D541 together coordinate Mg(2+).

It belongs to the hepadnaviridae P protein family.

The catalysed reaction is DNA(n) + a 2'-deoxyribonucleoside 5'-triphosphate = DNA(n+1) + diphosphate. The enzyme catalyses Endonucleolytic cleavage to 5'-phosphomonoester.. Its activity is regulated as follows. Activated by host HSP70 and HSP40 in vitro to be able to bind the epsilon loop of the pgRNA. Because deletion of the RNase H region renders the protein partly chaperone-independent, the chaperones may be needed indirectly to relieve occlusion of the RNA-binding site by this domain. Inhibited by several reverse-transcriptase inhibitors: Lamivudine, Adefovir and Entecavir. Functionally, multifunctional enzyme that converts the viral RNA genome into dsDNA in viral cytoplasmic capsids. This enzyme displays a DNA polymerase activity that can copy either DNA or RNA templates, and a ribonuclease H (RNase H) activity that cleaves the RNA strand of RNA-DNA heteroduplexes in a partially processive 3'- to 5'-endonucleasic mode. Neo-synthesized pregenomic RNA (pgRNA) are encapsidated together with the P protein, and reverse-transcribed inside the nucleocapsid. Initiation of reverse-transcription occurs first by binding the epsilon loop on the pgRNA genome, and is initiated by protein priming, thereby the 5'-end of (-)DNA is covalently linked to P protein. Partial (+)DNA is synthesized from the (-)DNA template and generates the relaxed circular DNA (RC-DNA) genome. After budding and infection, the RC-DNA migrates in the nucleus, and is converted into a plasmid-like covalently closed circular DNA (cccDNA). The activity of P protein does not seem to be necessary for cccDNA generation, and is presumably released from (+)DNA by host nuclear DNA repair machinery. This Pongo pygmaeus (Bornean orangutan) protein is Protein P.